We begin with the raw amino-acid sequence, 127 residues long: Cytochrome c2 (127 aa).

Residues 1 to 20 (MRKLVFGLFVLAASVAPAAA) form the signal peptide. Gln-21 carries the pyrrolidone carboxylic acid modification. Heme c contacts are provided by Cys-33, Cys-36, His-37, and Met-99.

This sequence belongs to the cytochrome c family. In terms of processing, binds 1 heme c group covalently per subunit.

Functionally, cytochrome c2 is found mainly in purple, non-sulfur, photosynthetic bacteria where it functions as the electron donor to the oxidized bacteriochlorophyll in the photophosphorylation pathway. However, it may also have a role in the respiratory chain and is found in some non-photosynthetic bacteria. This Blastochloris viridis (Rhodopseudomonas viridis) protein is Cytochrome c2 (cycA).